The following is a 307-amino-acid chain: UDP-3-O-acyl-N-acetylglucosamine deacetylase (307 aa).

Zn(2+)-binding residues include His78, His241, and Asp245. The active-site Proton donor is the His268.

It belongs to the LpxC family. Requires Zn(2+) as cofactor.

It catalyses the reaction a UDP-3-O-[(3R)-3-hydroxyacyl]-N-acetyl-alpha-D-glucosamine + H2O = a UDP-3-O-[(3R)-3-hydroxyacyl]-alpha-D-glucosamine + acetate. Its pathway is glycolipid biosynthesis; lipid IV(A) biosynthesis; lipid IV(A) from (3R)-3-hydroxytetradecanoyl-[acyl-carrier-protein] and UDP-N-acetyl-alpha-D-glucosamine: step 2/6. Its function is as follows. Catalyzes the hydrolysis of UDP-3-O-myristoyl-N-acetylglucosamine to form UDP-3-O-myristoylglucosamine and acetate, the committed step in lipid A biosynthesis. The sequence is that of UDP-3-O-acyl-N-acetylglucosamine deacetylase from Acidovorax sp. (strain JS42).